A 271-amino-acid chain; its full sequence is Dirigent protein 17 (271 aa).

Residues 1–12 (MEDTGSIKQEAQ) show a composition bias toward polar residues. The tract at residues 1–22 (MEDTGSIKQEAQSHPPGIFEIP) is disordered. A glycan (N-linked (GlcNAc...) asparagine) is linked at N255.

It belongs to the plant dirigent protein family. In terms of assembly, homodimer.

The protein localises to the secreted. It is found in the extracellular space. Its subcellular location is the apoplast. In terms of biological role, dirigent proteins impart stereoselectivity on the phenoxy radical-coupling reaction, yielding optically active lignans from two molecules of coniferyl alcohol in the biosynthesis of lignans, flavonolignans, and alkaloids and thus plays a central role in plant secondary metabolism. The sequence is that of Dirigent protein 17 (DIR17) from Arabidopsis thaliana (Mouse-ear cress).